Reading from the N-terminus, the 116-residue chain is Spermadhesin Z13 (116 aa).

Disulfide bonds link cysteine 14–cysteine 35 and cysteine 58–cysteine 79. The region spanning 14–115 is the CUB domain; that stretch reads CGDLYGEEYG…PDFFLIFRRV (102 aa).

It belongs to the spermadhesin family. Homodimer; disulfide-linked. As to expression, seminal plasma.

The protein localises to the secreted. In terms of biological role, may be involved in the fertilization process. The protein is Spermadhesin Z13 of Bos taurus (Bovine).